The sequence spans 161 residues: uncharacterized protein (161 aa).

A helical transmembrane segment spans residues 30-50 (GVILFRLLGVILFRLLGVILF).

It localises to the membrane. This is an uncharacterized protein from Homo sapiens (Human).